We begin with the raw amino-acid sequence, 179 residues long: MYEYLDRRYALALYQVAEKKGKVDEYLQDLREICELIENNHEFYEVIKHPQISTKKKKKTFISIFKDKIDEELLSFLLILIEKDRILYLREKLNEMEKIDLERKNTLKGIIKTAIPLLSNEFDNLRDIFQKKYDKNILFETEVDRNLLGGVYVRVGHDVIDDTVKSKIEEMKDLMLKQK.

Belongs to the ATPase delta chain family. As to quaternary structure, F-type ATPases have 2 components, F(1) - the catalytic core - and F(0) - the membrane proton channel. F(1) has five subunits: alpha(3), beta(3), gamma(1), delta(1), epsilon(1). F(0) has three main subunits: a(1), b(2) and c(10-14). The alpha and beta chains form an alternating ring which encloses part of the gamma chain. F(1) is attached to F(0) by a central stalk formed by the gamma and epsilon chains, while a peripheral stalk is formed by the delta and b chains.

The protein resides in the cell membrane. F(1)F(0) ATP synthase produces ATP from ADP in the presence of a proton or sodium gradient. F-type ATPases consist of two structural domains, F(1) containing the extramembraneous catalytic core and F(0) containing the membrane proton channel, linked together by a central stalk and a peripheral stalk. During catalysis, ATP synthesis in the catalytic domain of F(1) is coupled via a rotary mechanism of the central stalk subunits to proton translocation. In terms of biological role, this protein is part of the stalk that links CF(0) to CF(1). It either transmits conformational changes from CF(0) to CF(1) or is implicated in proton conduction. The sequence is that of ATP synthase subunit delta from Clostridium botulinum (strain Alaska E43 / Type E3).